Reading from the N-terminus, the 484-residue chain is PTS system MurNAc-GlcNAc-specific EIIBC component (484 aa).

The PTS EIIB type-1 domain maps to 5-87 (QQLAERIIAA…AELSGVKLGD (83 aa)). Catalysis depends on Cys27, which acts as the Phosphocysteine intermediate; for EIIB activity. The PTS EIIC type-1 domain occupies 130–484 (KSIANIFIPL…AMRQTDLLGD (355 aa)). 10 consecutive transmembrane segments (helical) span residues 135–155 (IFIP…IAAV), 160–180 (MVAG…FNVI), 200–220 (FGAT…TGIA), 234–254 (LQPG…LSIV), 274–294 (IALL…AGFV), 305–325 (IISI…LPLV), 349–369 (LLPI…ALWV), 384–404 (ALPV…TLPL), 408–428 (FLTA…IGHI), and 450–470 (LGYI…TYLF).

The protein localises to the cell membrane. It catalyses the reaction N-acetyl-beta-D-muramate-(1-&gt;4)-N-acetyl-D-glucosamine(out) + N(pros)-phospho-L-histidyl-[protein] = 6-phospho-N-acetyl-beta-D-muramate-(1-&gt;4)-N-acetyl-D-glucosamine(in) + L-histidyl-[protein]. Its pathway is cell wall biogenesis; peptidoglycan recycling. Functionally, the phosphoenolpyruvate-dependent sugar phosphotransferase system (sugar PTS), a major carbohydrate active transport system, catalyzes the phosphorylation of incoming sugar substrates concomitantly with their translocation across the cell membrane. This system is involved in the uptake and phosphorylation of MurNAc-GlcNAc, the principle peptidoglycan turnover product of S.aureus, yielding cytoplasmic MurNAc 6P-GlcNAc. The chain is PTS system MurNAc-GlcNAc-specific EIIBC component from Staphylococcus aureus (strain bovine RF122 / ET3-1).